The sequence spans 182 residues: Gas vesicle protein H1 (182 aa).

Over residues 1–11 (MVPDENDDASD) the composition is skewed to acidic residues. 2 disordered regions span residues 1–21 (MVPD…SGLL) and 65–106 (GRAD…GGTS). A compositionally biased stretch (low complexity) spans 12-21 (DQSSQLSGLL). Residues 92–101 (TTEDSIHVET) show a composition bias toward basic and acidic residues.

This sequence belongs to the gas vesicle GvpH family. In terms of assembly, gvpF to GvpM interact with each other in vitro, and may form multi-subunit complex(es). Interacts with GvpC1. Might interact with GvpA1.

The protein localises to the cytoplasm. It is found in the gas vesicle. In terms of biological role, proteins GvpF to GvpM might be involved in nucleating gas vesicle formation. May be important for the stability of gas vesicles. Gas vesicles are hollow, gas filled proteinaceous nanostructures found in several microbial planktonic microorganisms. They allow positioning of halobacteria at the optimal depth for growth in the poorly aerated, shallow brine pools of their habitat. Its function is as follows. Expression of a 9.5 kb p-vac DNA fragment containing 2 divergently transcribed regions (gvpD-gvpE-gvpF-gvpG-gvpH-gvpI-gvpJ-gvpK-gvpL-gvpM and gvpA-gvpC-gvpN-gvpO) allows H.volcanii to produce gas vesicles. A similar region restores gas vesicle production in H.halobium without the p-vac locus, but it still has the c-vac locus. The polypeptide is Gas vesicle protein H1 (gvpH11) (Halobacterium salinarum (strain ATCC 700922 / JCM 11081 / NRC-1) (Halobacterium halobium)).